Reading from the N-terminus, the 656-residue chain is Methionine--tRNA ligase (656 aa).

A 'HIGH' region motif is present at residues 13-23 (YYPSGNLHIGH). A 'KMSKS' region motif is present at residues 308 to 312 (KMSKS). An ATP-binding site is contributed by lysine 311. The tRNA-binding domain occupies 556–656 (DFDKVEIKAA…SAIPNGAVIK (101 aa)).

Belongs to the class-I aminoacyl-tRNA synthetase family. MetG type 2B subfamily. As to quaternary structure, homodimer.

Its subcellular location is the cytoplasm. The enzyme catalyses tRNA(Met) + L-methionine + ATP = L-methionyl-tRNA(Met) + AMP + diphosphate. In terms of biological role, is required not only for elongation of protein synthesis but also for the initiation of all mRNA translation through initiator tRNA(fMet) aminoacylation. This is Methionine--tRNA ligase from Staphylococcus epidermidis (strain ATCC 12228 / FDA PCI 1200).